Here is a 122-residue protein sequence, read N- to C-terminus: Large ribosomal subunit protein uL18 (122 aa).

The protein belongs to the universal ribosomal protein uL18 family. As to quaternary structure, part of the 50S ribosomal subunit; part of the 5S rRNA/L5/L18/L25 subcomplex. Contacts the 5S and 23S rRNAs.

This is one of the proteins that bind and probably mediate the attachment of the 5S RNA into the large ribosomal subunit, where it forms part of the central protuberance. This Desulfitobacterium hafniense (strain DSM 10664 / DCB-2) protein is Large ribosomal subunit protein uL18.